A 477-amino-acid chain; its full sequence is Ribulose bisphosphate carboxylase large chain (477 aa).

Positions 1–2 (MS) are excised as a propeptide. Position 3 is an N-acetylproline (Pro-3). Position 14 is an N6,N6,N6-trimethyllysine (Lys-14). The substrate site is built by Asn-123 and Thr-173. Lys-175 acts as the Proton acceptor in catalysis. Position 177 (Lys-177) interacts with substrate. Residues Lys-201, Asp-203, and Glu-204 each contribute to the Mg(2+) site. Lys-201 is modified (N6-carboxylysine). The Proton acceptor role is filled by His-294. Residues Arg-295, His-327, and Ser-379 each coordinate substrate.

Belongs to the RuBisCO large chain family. Type I subfamily. As to quaternary structure, heterohexadecamer of 8 large chains and 8 small chains; disulfide-linked. The disulfide link is formed within the large subunit homodimers. It depends on Mg(2+) as a cofactor. In terms of processing, the disulfide bond which can form in the large chain dimeric partners within the hexadecamer appears to be associated with oxidative stress and protein turnover.

It is found in the plastid. The protein resides in the chloroplast. The enzyme catalyses 2 (2R)-3-phosphoglycerate + 2 H(+) = D-ribulose 1,5-bisphosphate + CO2 + H2O. The catalysed reaction is D-ribulose 1,5-bisphosphate + O2 = 2-phosphoglycolate + (2R)-3-phosphoglycerate + 2 H(+). RuBisCO catalyzes two reactions: the carboxylation of D-ribulose 1,5-bisphosphate, the primary event in carbon dioxide fixation, as well as the oxidative fragmentation of the pentose substrate in the photorespiration process. Both reactions occur simultaneously and in competition at the same active site. This chain is Ribulose bisphosphate carboxylase large chain, found in Nicotiana acuminata (Acuminate tobacco).